We begin with the raw amino-acid sequence, 90 residues long: MSRIVNCVKLKREAEGLDFPPYPGELGTRIWQQISKEAWEEWKQIQTRLVNENRLNLADARARKYLQQQMERFLFEDGTVEAQGYVPPSA.

It belongs to the Fe(2+)-trafficking protein family.

Its function is as follows. Could be a mediator in iron transactions between iron acquisition and iron-requiring processes, such as synthesis and/or repair of Fe-S clusters in biosynthetic enzymes. This is Probable Fe(2+)-trafficking protein from Bordetella bronchiseptica (strain ATCC BAA-588 / NCTC 13252 / RB50) (Alcaligenes bronchisepticus).